A 326-amino-acid polypeptide reads, in one-letter code: Eukaryotic translation initiation factor 3 subunit I (326 aa).

5 WD repeats span residues 8–47 (GHER…RLGT), 50–89 (GHQG…VIAS), 145–184 (MTES…KVVD), 188–227 (DHSA…CLKT), and 285–326 (GHFG…NIFE).

It belongs to the eIF-3 subunit I family. Component of the eukaryotic translation initiation factor 3 (eIF-3) complex. The eIF-3 complex interacts with pix.

The protein localises to the cytoplasm. Functionally, component of the eukaryotic translation initiation factor 3 (eIF-3) complex, which is involved in protein synthesis of a specialized repertoire of mRNAs and, together with other initiation factors, stimulates binding of mRNA and methionyl-tRNAi to the 40S ribosome. The eIF-3 complex specifically targets and initiates translation of a subset of mRNAs involved in cell proliferation. This chain is Eukaryotic translation initiation factor 3 subunit I, found in Drosophila simulans (Fruit fly).